The primary structure comprises 442 residues: Cyclic 2,3-diphosphoglycerate synthetase (442 aa).

Belongs to the cyclic 2,3-diphosphoglycerate synthetase family.

The protein resides in the cytoplasm. It carries out the reaction (2R)-2,3-bisphosphoglycerate + ATP + H(+) = cyclic (2R)-2,3-bisphosphoglycerate + ADP + phosphate. In terms of biological role, catalyzes the formation of cyclic 2,3-diphosphoglycerate (cDPG) by formation of an intramolecular phosphoanhydride bond at the expense of ATP. The polypeptide is Cyclic 2,3-diphosphoglycerate synthetase (Rubrobacter xylanophilus (strain DSM 9941 / JCM 11954 / NBRC 16129 / PRD-1)).